Reading from the N-terminus, the 309-residue chain is D-allose kinase (309 aa).

Residues 10–17 (GVDMGATH) and 142–149 (GMGFAVWM) contribute to the ATP site.

Belongs to the ROK (NagC/XylR) family.

The enzyme catalyses D-allose + ATP = D-allose 6-phosphate + ADP + H(+). The protein operates within carbohydrate degradation; D-allose degradation. Functionally, catalyzes the phosphorylation of D-allose to D-allose 6-phosphate. Also has low level glucokinase activity in vitro. The chain is D-allose kinase from Escherichia coli (strain K12).